We begin with the raw amino-acid sequence, 444 residues long: Protein cereblon (444 aa).

A disordered region spans residues 1–52 (MAGEGDPEDAAHNMGNHLPLLPAEEEEEDEIEMEVEDQDNKEPKKPNIINFD). Residues 23 to 37 (AEEEEEDEIEMEVED) show a composition bias toward acidic residues. The region spanning 80-321 (CPVIPVLPQV…CELDIMNKCT (242 aa)) is the Lon N-terminal domain. The 109-residue stretch at 320 to 428 (CTSLCCKQCQ…LTRSALLPTI (109 aa)) folds into the CULT domain. Positions 325 and 328 each coordinate Zn(2+). The (S)-thalidomide site is built by His380, Trp382, and Trp388. 2 residues coordinate Zn(2+): Cys393 and Cys396.

It belongs to the CRBN family. Component of a DCX (DDB1-CUL4-X-box) protein ligase complex, at least composed of CRBN, CUL4A, DDB1 and RBX1. Interacts directly with DDB1. Interacts with KCNT1. Interacts with ILF2. Interacts with TRAF6 and ECSIT. Post-translationally, ubiquitinated, ubiquitination is mediated by its own DCX protein ligase complex.

Its subcellular location is the cytoplasm. It localises to the nucleus. The protein resides in the membrane. Its pathway is protein modification; protein ubiquitination. Its function is as follows. Substrate recognition component of a DCX (DDB1-CUL4-X-box) E3 protein ligase complex that mediates the ubiquitination and subsequent proteasomal degradation of target proteins, such as MEIS2, ILF2 or GLUL. Normal degradation of key regulatory proteins is required for normal limb outgrowth and expression of the fibroblast growth factor FGF8. Maintains presynaptic glutamate release and consequently cognitive functions, such as memory and learning, by negatively regulating large-conductance calcium-activated potassium (BK) channels in excitatory neurons. Likely to function by regulating the assembly and neuronal surface expression of BK channels via its interaction with KCNT1. May also be involved in regulating anxiety-like behaviors via a BK channel-independent mechanism. Plays a negative role in TLR4 signaling by interacting with TRAF6 and ECSIT, leading to inhibition of ECSIT ubiquitination, an important step of the signaling. In Bos taurus (Bovine), this protein is Protein cereblon (CRBN).